A 930-amino-acid polypeptide reads, in one-letter code: GPI ethanolamine phosphate transferase 1 (930 aa).

The Cytoplasmic segment spans residues 1–8; the sequence is MARLGRTG. Residues 9-29 traverse the membrane as a helical segment; it reads FLTLAVVFHLIYAYSIFDIYF. Over 30–466 the chain is Lumenal; it reads VSPIVSGMRP…LQTYDWLFLR (437 aa). An N-linked (GlcNAc...) asparagine glycan is attached at asparagine 148. The chain crosses the membrane as a helical span at residues 467–487; the sequence is TIVTFGYVGWIAYALTTVIHL. The Cytoplasmic segment spans residues 488–498; that stretch reads HVLHGASESDR. Residues 499–519 form a helical membrane-spanning segment; that stretch reads TTASISFFSSVLVALFSVFLY. Topologically, residues 520-521 are lumenal; it reads QG. Residues 522–542 form a helical membrane-spanning segment; the sequence is SPWRYYLYGFFPIFFWEEVFA. Topologically, residues 543–569 are cytoplasmic; sequence RRKAFHAGRAGALLLPKRDLHSNKVED. The chain crosses the membrane as a helical span at residues 570–590; that stretch reads IDTITYGGAFMLLTGLLYLLF. Residues 591 to 611 lie on the Lumenal side of the membrane; it reads EDEILGTSHQPAAVSRKGSRN. The helical transmembrane segment at 612-632 threads the bilayer; it reads IMGLQLGMVLLALIVTRSSAA. The Cytoplasmic portion of the chain corresponds to 633–639; sequence SLQAKQG. A helical membrane pass occupies residues 640-660; that stretch reads LPFGNQVVGWGVLIASLLLPF. The Lumenal segment spans residues 661 to 684; it reads AHRLYPNSHYLHRLMIIFLTFSPT. A helical transmembrane segment spans residues 685–705; it reads FIILTISYEGLFYFAFCMTLV. Residues 706–761 are Cytoplasmic-facing; that stretch reads TWVRLEHATYVYTAKPVAKQAQETIEPPKKANPGATTVVDGETYRFRTLTVSDARV. The chain crosses the membrane as a helical span at residues 762–782; that stretch reads ALFFFFLLQSAFFSTGNIASI. The Lumenal portion of the chain corresponds to 783–803; sequence SSFSLDSVYRLIPVFNPFSQG. Residues 804 to 824 traverse the membrane as a helical segment; that stretch reads ALLILKLLIPFAIISANLGIL. At 825–833 the chain is on the cytoplasmic side; sequence NRRLEVAPS. The chain crosses the membrane as a helical span at residues 834–854; sequence ALFMVVMAISDVMTLNFFYMV. Residues 855-870 lie on the Lumenal side of the membrane; it reads RDEGSWLDIGTTISHF. Residues 871–891 traverse the membrane as a helical segment; the sequence is CIASFLCTFVAGLEFLSEVFI. The Cytoplasmic segment spans residues 892-930; the sequence is SGVDFGLRTDAITASVPDIVNGITSKGQKDVPNGVEDKE.

It belongs to the PIGG/PIGN/PIGO family. PIGN subfamily.

The protein localises to the endoplasmic reticulum membrane. The protein operates within glycolipid biosynthesis; glycosylphosphatidylinositol-anchor biosynthesis. Functionally, ethanolamine phosphate transferase involved in glycosylphosphatidylinositol-anchor biosynthesis. Transfers ethanolamine phosphate to the first alpha-1,4-linked mannose of the glycosylphosphatidylinositol precursor of GPI-anchor. This Emericella nidulans (strain FGSC A4 / ATCC 38163 / CBS 112.46 / NRRL 194 / M139) (Aspergillus nidulans) protein is GPI ethanolamine phosphate transferase 1 (mcd4).